The sequence spans 148 residues: Large ribosomal subunit protein uL11 (148 aa).

This sequence belongs to the universal ribosomal protein uL11 family. In terms of assembly, part of the ribosomal stalk of the 50S ribosomal subunit. Interacts with L10 and the large rRNA to form the base of the stalk. L10 forms an elongated spine to which L12 dimers bind in a sequential fashion forming a multimeric L10(L12)X complex. One or more lysine residues are methylated.

In terms of biological role, forms part of the ribosomal stalk which helps the ribosome interact with GTP-bound translation factors. The polypeptide is Large ribosomal subunit protein uL11 (Myxococcus xanthus (strain DK1622)).